A 277-amino-acid polypeptide reads, in one-letter code: Large ribosomal subunit protein uL2c (277 aa).

A disordered region spans residues 224 to 257; that stretch reads VMNPIDHPHGGGEGRAPIGRKKPLTPWGHPALGR.

The protein belongs to the universal ribosomal protein uL2 family. In terms of assembly, part of the 50S ribosomal subunit.

Its subcellular location is the plastid. The protein localises to the chloroplast. The polypeptide is Large ribosomal subunit protein uL2c (rpl2) (Anthoceros angustus (Hornwort)).